Consider the following 527-residue polypeptide: N-acetylglutamate synthase, mitochondrial (527 aa).

Residues 1 to 18 constitute a mitochondrion transit peptide; the sequence is MATAWVATALRSAAAARR. Residues 14–91 are disordered; it reads AAARRLRSPG…PLESPAPPAG (78 aa). An amino-acid kinase domain (AAK) region spans residues 19 to 369; sequence LRSPGGPGGS…CGTLFKNAER (351 aa). Over residues 54 to 63 the composition is skewed to basic and acidic residues; the sequence is AHAEDAEGAK. The span at 77–89 shows a compositional bias: pro residues; it reads TPLPTPLESPAPP. In terms of domain architecture, N-acetyltransferase spans 368–519; it reads ERMLRVRNLD…HAKGLPDSFC (152 aa). Substrate is bound by residues Lys394, Lys437, and 467–472; that span reads RSRVTN.

Belongs to the acetyltransferase family. As to quaternary structure, homodimer. Homotetramer. Post-translationally, probably processed by mitochondrial processing peptidase (MPP). The long form has not yet been isolated. Highly expressed in the liver and small intestine. Weakly expressed in the kidney, spleen and testis.

The protein localises to the mitochondrion matrix. The enzyme catalyses L-glutamate + acetyl-CoA = N-acetyl-L-glutamate + CoA + H(+). It participates in amino-acid biosynthesis; L-arginine biosynthesis; N(2)-acetyl-L-ornithine from L-glutamate: step 1/4. Increased by L-arginine. Functionally, plays a role in the regulation of ureagenesis by producing the essential cofactor N-acetylglutamate (NAG), thus modulating carbamoylphosphate synthase I (CPS1) activity. This chain is N-acetylglutamate synthase, mitochondrial (Nags), found in Mus musculus (Mouse).